The chain runs to 357 residues: Phosphoribosylformylglycinamidine cyclo-ligase (357 aa).

This sequence belongs to the AIR synthase family.

It localises to the cytoplasm. The enzyme catalyses 2-formamido-N(1)-(5-O-phospho-beta-D-ribosyl)acetamidine + ATP = 5-amino-1-(5-phospho-beta-D-ribosyl)imidazole + ADP + phosphate + H(+). The protein operates within purine metabolism; IMP biosynthesis via de novo pathway; 5-amino-1-(5-phospho-D-ribosyl)imidazole from N(2)-formyl-N(1)-(5-phospho-D-ribosyl)glycinamide: step 2/2. This chain is Phosphoribosylformylglycinamidine cyclo-ligase, found in Rhizobium etli (strain ATCC 51251 / DSM 11541 / JCM 21823 / NBRC 15573 / CFN 42).